The sequence spans 1021 residues: Probable calcium-transporting ATPase 6, plasma membrane-type (1021 aa).

Residues 1-155 (MEGGRSWSIE…RSFWMFVWDA (155 aa)) are Cytoplasmic-facing. 2 helical membrane-spanning segments follow: residues 156 to 176 (LHDL…VVGL) and 181 to 201 (WPMG…VVLV). At 202-241 (TATSDYQQARKFMELDREKQKIYIRVTRDKKTKEVLVHDL) the chain is on the cytoplasmic side. Transmembrane regions (helical) follow at residues 242-262 (VVGD…GLFI) and 338-358 (VATI…LVLL). The Cytoplasmic segment spans residues 359–384 (ARFLADKGMHVGLLNWSANDALTIVN). Residues 385–405 (YFAIAVTIIVVAVPEGLPLAV) form a helical membrane-spanning segment. The active-site 4-aspartylphosphate intermediate is D441. Residues D740 and D744 each coordinate Mg(2+). Residues 807–827 (IVALIVNFVSACIIGSAPLTA) form a helical membrane-spanning segment. The Cytoplasmic portion of the chain corresponds to 828-829 (VQ). Helical transmembrane passes span 830–850 (LLWV…TEPP) and 879–899 (GLYQ…LLSI). Residues 900 to 942 (EGPQSDKTINTLIFNSFVFCQVFNEINCREMEKINVLQGIFRN) are Cytoplasmic-facing. A run of 2 helical transmembrane segments spans residues 943–963 (WIFV…VEFL) and 974–994 (GELW…SVIL). Residues 995 to 1021 (KCIPVEFNKTNTKPHGYELIPEGPEIL) lie on the Cytoplasmic side of the membrane.

It belongs to the cation transport ATPase (P-type) (TC 3.A.3) family. Type IIB subfamily.

The protein localises to the membrane. It carries out the reaction Ca(2+)(in) + ATP + H2O = Ca(2+)(out) + ADP + phosphate + H(+). Activated by calmodulin. This magnesium-dependent enzyme catalyzes the hydrolysis of ATP coupled with the translocation of calcium from the cytosol out of the cell, into the endoplasmic reticulum, or into organelles. In Oryza sativa subsp. japonica (Rice), this protein is Probable calcium-transporting ATPase 6, plasma membrane-type.